Consider the following 783-residue polypeptide: DNA repair and recombination protein RAD54-like (783 aa).

The required for chromatin remodeling, strand pairing activities and coupling of ATPase activity stretch occupies residues 2–9 (RRSLAPSQ). Thr-22 is subject to Phosphothreonine. The region spanning 165–340 (EGKRGNFNGC…FSLVNFVNPE (176 aa)) is the Helicase ATP-binding domain. An ATP-binding site is contributed by 178–185 (DEMGLGKT). The short motif at 291 to 294 (DEGH) is the DEGH box element. The 158-residue stretch at 497–654 (LLDFMLAAIR…NNESSEKHFT (158 aa)) folds into the Helicase C-terminal domain. The tract at residues 737–783 (AESKPAAITEDDESEQQQQSPKRTSKNDDNDEDFDPENSAEEQFLGF) is disordered. Residues 765-776 (DNDEDFDPENSA) are compositionally biased toward acidic residues.

The protein belongs to the SNF2/RAD54 helicase family. In terms of assembly, interacts (via N-terminus) with spn-A/Rad51.

It localises to the nucleus. Functionally, involved in mitotic DNA repair and meiotic recombination. Functions in the recombinational DNA repair pathway. Essential for interhomolog gene conversion (GC), but may have a less important role in intersister GC than spn-A/Rad51. In the presence of DNA, spn-A/Rad51 enhances the ATPase activity of okr/Rad54. The chain is DNA repair and recombination protein RAD54-like from Drosophila mojavensis (Fruit fly).